We begin with the raw amino-acid sequence, 569 residues long: Cytochrome P450 monooxygenase abl1 (569 aa).

C464 is a heme binding site.

The protein belongs to the cytochrome P450 family. Requires heme as cofactor.

Its pathway is hormone biosynthesis. In terms of biological role, cytochrome P450 monooxygenase; part of the gene cluster that mediates the biosynthesis of abscisic acid (ABA), a phytohormone that acts antagonistically toward salicylic acid (SA), jasmonic acid (JA) and ethylene (ETH) signaling, to impede plant defense responses. The first step of the pathway catalyzes the reaction from farnesyl diphosphate to alpha-ionylideneethane performed by the alpha-ionylideneethane synthase abl3 via a three-step reaction mechanism involving 2 neutral intermediates, beta-farnesene and allofarnesene. The cytochrome P450 monooxygenase abl1 might then be involved in the conversion of alpha-ionylideneethane to alpha-ionylideneacetic acid. Alpha-ionylideneacetic acid is further converted to abscisic acid in 2 steps involving the cytochrome P450 monooxygenase abl2 and the short-chain dehydrogenase/reductase abl4, via the intermediates 1'-deoxy-ABA or 1',4'-trans-diol-ABA, depending on the order of action of these 2 enzymes. Abl2 is responsible for the hydroxylation of carbon atom C-1' and abl4 might be involved in the oxidation of the C-4' carbon atom. The protein is Cytochrome P450 monooxygenase abl1 of Leptosphaeria maculans (strain JN3 / isolate v23.1.3 / race Av1-4-5-6-7-8) (Blackleg fungus).